The primary structure comprises 957 residues: Glycine dehydrogenase (decarboxylating) (957 aa).

Lysine 704 is subject to N6-(pyridoxal phosphate)lysine.

It belongs to the GcvP family. As to quaternary structure, the glycine cleavage system is composed of four proteins: P, T, L and H. The cofactor is pyridoxal 5'-phosphate.

The enzyme catalyses N(6)-[(R)-lipoyl]-L-lysyl-[glycine-cleavage complex H protein] + glycine + H(+) = N(6)-[(R)-S(8)-aminomethyldihydrolipoyl]-L-lysyl-[glycine-cleavage complex H protein] + CO2. In terms of biological role, the glycine cleavage system catalyzes the degradation of glycine. The P protein binds the alpha-amino group of glycine through its pyridoxal phosphate cofactor; CO(2) is released and the remaining methylamine moiety is then transferred to the lipoamide cofactor of the H protein. The protein is Glycine dehydrogenase (decarboxylating) of Bordetella petrii (strain ATCC BAA-461 / DSM 12804 / CCUG 43448).